The sequence spans 1039 residues: Isoleucine--tRNA ligase (1039 aa).

A 'HIGH' region motif is present at residues Pro46 to Thr56. Residues Lys600 to Ser604 carry the 'KMSKS' region motif. An ATP-binding site is contributed by Lys603.

The protein belongs to the class-I aminoacyl-tRNA synthetase family. IleS type 2 subfamily. In terms of assembly, monomer. The cofactor is Zn(2+).

The protein resides in the cytoplasm. The catalysed reaction is tRNA(Ile) + L-isoleucine + ATP = L-isoleucyl-tRNA(Ile) + AMP + diphosphate. Catalyzes the attachment of isoleucine to tRNA(Ile). As IleRS can inadvertently accommodate and process structurally similar amino acids such as valine, to avoid such errors it has two additional distinct tRNA(Ile)-dependent editing activities. One activity is designated as 'pretransfer' editing and involves the hydrolysis of activated Val-AMP. The other activity is designated 'posttransfer' editing and involves deacylation of mischarged Val-tRNA(Ile). This chain is Isoleucine--tRNA ligase, found in Methanocaldococcus jannaschii (strain ATCC 43067 / DSM 2661 / JAL-1 / JCM 10045 / NBRC 100440) (Methanococcus jannaschii).